Here is a 212-residue protein sequence, read N- to C-terminus: Pyridoxine/pyridoxamine 5'-phosphate oxidase (212 aa).

Substrate is bound by residues 8–11 (RREY) and Lys-66. FMN-binding positions include 61–66 (RIVLLK), 76–77 (FT), Arg-82, Lys-83, and Gln-105. Residues Tyr-123, Arg-127, and Ser-131 each coordinate substrate. Residues 140 to 141 (QS) and Trp-185 each bind FMN. 191–193 (RLH) is a binding site for substrate. Residue Arg-195 participates in FMN binding.

This sequence belongs to the pyridoxamine 5'-phosphate oxidase family. As to quaternary structure, homodimer. FMN serves as cofactor.

It catalyses the reaction pyridoxamine 5'-phosphate + O2 + H2O = pyridoxal 5'-phosphate + H2O2 + NH4(+). The catalysed reaction is pyridoxine 5'-phosphate + O2 = pyridoxal 5'-phosphate + H2O2. It functions in the pathway cofactor metabolism; pyridoxal 5'-phosphate salvage; pyridoxal 5'-phosphate from pyridoxamine 5'-phosphate: step 1/1. Its pathway is cofactor metabolism; pyridoxal 5'-phosphate salvage; pyridoxal 5'-phosphate from pyridoxine 5'-phosphate: step 1/1. Catalyzes the oxidation of either pyridoxine 5'-phosphate (PNP) or pyridoxamine 5'-phosphate (PMP) into pyridoxal 5'-phosphate (PLP). The polypeptide is Pyridoxine/pyridoxamine 5'-phosphate oxidase (Shewanella halifaxensis (strain HAW-EB4)).